A 205-amino-acid polypeptide reads, in one-letter code: Outer-membrane lipoprotein carrier protein (205 aa).

A signal peptide spans 1-22 (MKKIVIVISILLTSFLSSAVSA).

It belongs to the LolA family. Monomer.

The protein resides in the periplasm. Its function is as follows. Participates in the translocation of lipoproteins from the inner membrane to the outer membrane. Only forms a complex with a lipoprotein if the residue after the N-terminal Cys is not an aspartate (The Asp acts as a targeting signal to indicate that the lipoprotein should stay in the inner membrane). In Psychromonas ingrahamii (strain DSM 17664 / CCUG 51855 / 37), this protein is Outer-membrane lipoprotein carrier protein.